We begin with the raw amino-acid sequence, 172 residues long: Shikimate kinase (172 aa).

Position 14 to 19 (14 to 19 (GAGKST)) interacts with ATP. S18 contacts Mg(2+). Substrate is bound by residues D36, R60, and G82. R120 is a binding site for ATP. A substrate-binding site is contributed by R139. Q156 contributes to the ATP binding site.

It belongs to the shikimate kinase family. As to quaternary structure, monomer. Requires Mg(2+) as cofactor.

It localises to the cytoplasm. It catalyses the reaction shikimate + ATP = 3-phosphoshikimate + ADP + H(+). Its pathway is metabolic intermediate biosynthesis; chorismate biosynthesis; chorismate from D-erythrose 4-phosphate and phosphoenolpyruvate: step 5/7. Its function is as follows. Catalyzes the specific phosphorylation of the 3-hydroxyl group of shikimic acid using ATP as a cosubstrate. The chain is Shikimate kinase from Aliivibrio fischeri (strain ATCC 700601 / ES114) (Vibrio fischeri).